The chain runs to 392 residues: NDP-glycosyltransferase YjiC (392 aa).

UDP-binding positions include N18, T229, S255, V278, H293, and 297–301 (NSTME).

The protein belongs to the UDP-glycosyltransferase family. In terms of assembly, monomer.

It carries out the reaction an NDP-glycose + an acceptor = a glycosylated acceptor + NDP.. With respect to regulation, activity is improved in the presence of Mn(2+), Mg(2+) and Ca(2+), and inhibited by Ni(2+), Zn(2+) and Cu(2+). Its function is as follows. Glycosyltransferase that can glycosylate a wide range of substrates, including various flavonoids, phenyl ketones, curcuminoid, lignins, zingerone, triterpenes, stilbene and anthraquinone, using UDP-glucose or ADP-glucose as sugar donor. It also exhibits O-, N- and S-glycosylation activities towards simple aromatics. In vivo, the broad acceptor tolerance of YjiC might function as a detoxification agent against exogenous xenobiotics to make the strain adaptable to the changeable environment. The polypeptide is NDP-glycosyltransferase YjiC (yjiC) (Bacillus subtilis (strain 168)).